The sequence spans 638 residues: Neuroendocrine convertase 2 (638 aa).

Positions 1–25 are cleaved as a signal peptide; sequence MRGGCISQGKAAAGLLFCVMVFASA. Positions 26–109 are excised as a propeptide; sequence ERPVFTNHFL…QQEGFNRKKR (84 aa). Positions 129–453 constitute a Peptidase S8 domain; it reads QWYLINTGQA…YGVLDAGAMV (325 aa). Catalysis depends on charge relay system residues Asp-167 and His-208. 2 disulfides stabilise this stretch: Cys-225-Cys-376 and Cys-317-Cys-347. Residue Asn-375 is glycosylated (N-linked (GlcNAc...) asparagine). Ser-384 functions as the Charge relay system in the catalytic mechanism. The P/Homo B domain maps to 461–597; that stretch reads TVPERFHCVG…TLMLHGTQSA (137 aa). Residues Cys-468 and Cys-494 are joined by a disulfide bond. N-linked (GlcNAc...) asparagine glycans are attached at residues Asn-514 and Asn-524.

This sequence belongs to the peptidase S8 family. Furin subfamily.

It is found in the cytoplasmic vesicle. It localises to the secretory vesicle. The protein localises to the secreted. The enzyme catalyses Release of protein hormones and neuropeptides from their precursors, generally by hydrolysis of -Lys-Arg-|- bonds.. Serine endopeptidase which is involved in the processing of hormone and other protein precursors at sites comprised of pairs of basic amino acid residues. Responsible for the release of glucagon from proglucagon in pancreatic A cells. The polypeptide is Neuroendocrine convertase 2 (PCSK2) (Bos taurus (Bovine)).